The chain runs to 261 residues: Gap junction beta-6 protein (261 aa).

Residues 1-22 lie on the Cytoplasmic side of the membrane; it reads MDWGTLHTFIGGVNKHSTSIGK. The chain crosses the membrane as a helical span at residues 23 to 45; the sequence is VWITVIFIFRVMILVVAAQEVWG. Residues 46–75 lie on the Extracellular side of the membrane; it reads DEQEDFVCNTLQPGCKNVCYDHFFPVSHIR. A helical transmembrane segment spans residues 76–98; the sequence is LWALQLIFVSTPALLVAMHVAYY. The Cytoplasmic portion of the chain corresponds to 99-131; that stretch reads RHETTRKFRRGEKRNDFKDIEDIKKQKVRIEGS. The chain crosses the membrane as a helical span at residues 132–154; sequence LWWTYTSSIFFRIIFEAAFMYVF. Topologically, residues 155–192 are extracellular; sequence YFLYNGYHLPWVLKCGIDPCPNLVDCFISRPTEKTVFT. Residues 193-215 traverse the membrane as a helical segment; that stretch reads IFMISASVICMLLNVAELCYLLL. The Cytoplasmic portion of the chain corresponds to 216-261; sequence KVCFRRSKRAQTQKNHPNHALKESKQNEMNELISDSGQNAITGFPS.

Belongs to the connexin family. Beta-type (group I) subfamily. A connexon is composed of a hexamer of connexins. Interacts with CNST.

The protein resides in the cell membrane. It is found in the cell junction. It localises to the gap junction. Its function is as follows. One gap junction consists of a cluster of closely packed pairs of transmembrane channels, the connexons, through which materials of low MW diffuse from one cell to a neighboring cell. The protein is Gap junction beta-6 protein (GJB6) of Homo sapiens (Human).